The primary structure comprises 490 residues: MVSAAAGWAAPAFAVAAVVIWVVLCSELLRRRRRGAGSGKGDAAAAARLPPGSFGWPVVGETLEFVSCAYSPRPEAFVDKRRKLHGSAVFRSHLFGSATVVTADAEVSRFVLQSDARAFVPWYPRSLTELMGKSSILLINGALQRRVHGLVGAFFKSSHLKSQLTADMRRRLSPALSSFPDSSLLHVQHLAKSVVFEILVRGLIGLEAGEEMQQLKQQFQEFIVGLMSLPIKLPGTRLYRSLQAKKKMARLIQRIIREKRARRAAASPPRDAIDVLIGDGSDELTDELISDNMIDLMIPAEDSVPVLITLAVKFLSECPLALHQLEEENIQLKRRKTDMGETLQWTDYMSLSFTQHVITETLRLGNIIGGIMRKAVRDVEVKGHLIPKGWCVFVYFRSVHLDDTLYDEPYKFNPWRWKEKDMSNGSFTPFGGGQRLCPGLDLARLEASIFLHHLVTSFRWVAEEDHIVNFPTVRLKRGMPIRVTAKEDDD.

A helical membrane pass occupies residues 4 to 24 (AAAGWAAPAFAVAAVVIWVVL). Cys-437 lines the heme pocket.

This sequence belongs to the cytochrome P450 family. Heme serves as cofactor. As to expression, expressed at low levels leaf blades, shoot apex and elongating stem.

Its subcellular location is the membrane. It carries out the reaction 6-deoxoteasterone + reduced [NADPH--hemoprotein reductase] + O2 = 3-dehydro-6-deoxoteasterone + oxidized [NADPH--hemoprotein reductase] + 2 H2O + H(+). It participates in plant hormone biosynthesis; brassinosteroid biosynthesis. Functionally, catalyzes the C6-oxidation step in brassinosteroids biosynthesis. May convert 6-deoxoteasterone (6-deoxoTE) to 3-dehydro-6-deoxoteasterone (6-deoxo3DT, 6-deoxo3DHT), and teasterone (TE) to 3-dehydroteasterone (3DT, 3-DHT). Involved in the elongation of leaf sheaths and stems. This is Cytochrome P450 90D2 from Oryza sativa subsp. japonica (Rice).